Here is a 320-residue protein sequence, read N- to C-terminus: Glutaminase (320 aa).

Substrate is bound by residues S70, N121, E165, N172, Y196, Y248, and V266.

The protein belongs to the glutaminase family. As to quaternary structure, homotetramer.

The catalysed reaction is L-glutamine + H2O = L-glutamate + NH4(+). The polypeptide is Glutaminase (Mycobacterium marinum (strain ATCC BAA-535 / M)).